Reading from the N-terminus, the 461-residue chain is tRNA modification GTPase MnmE (461 aa).

Residues R27, E89, and R128 each contribute to the (6S)-5-formyl-5,6,7,8-tetrahydrofolate site. Positions 224–382 (GLATAIVGRP…LENAIEQLFF (159 aa)) constitute a TrmE-type G domain. N234 provides a ligand contact to K(+). GTP is bound by residues 234-239 (NVGKSS), 253-259 (TDIAGTT), and 278-281 (DTAG). S238 serves as a coordination point for Mg(2+). K(+) contacts are provided by T253, I255, and T258. T259 provides a ligand contact to Mg(2+). Position 461 (K461) interacts with (6S)-5-formyl-5,6,7,8-tetrahydrofolate.

It belongs to the TRAFAC class TrmE-Era-EngA-EngB-Septin-like GTPase superfamily. TrmE GTPase family. Homodimer. Heterotetramer of two MnmE and two MnmG subunits. Requires K(+) as cofactor.

Its subcellular location is the cytoplasm. Exhibits a very high intrinsic GTPase hydrolysis rate. Involved in the addition of a carboxymethylaminomethyl (cmnm) group at the wobble position (U34) of certain tRNAs, forming tRNA-cmnm(5)s(2)U34. This chain is tRNA modification GTPase MnmE, found in Lactobacillus johnsonii (strain CNCM I-12250 / La1 / NCC 533).